Here is a 376-residue protein sequence, read N- to C-terminus: Chaperone protein DnaJ (376 aa).

Residues 5-72 enclose the J domain; the sequence is DFYEVLGVPK…QKRAAYDQYG (68 aa). Residues 136–214 form a CR-type zinc finger; the sequence is GKEAQIRIPS…CHGQGRVKKQ (79 aa). Zn(2+) is bound by residues C149, C152, C166, C169, C188, C191, C202, and C205. CXXCXGXG motif repeat units lie at residues 149-156, 166-173, 188-195, and 202-209; these read CETCHGSG, CGTCQGSG, CPHCRGTG, and CTACHGQG. Disordered regions lie at residues 227–246 and 354–376; these read DGMR…GGPP and KKGG…SFFS. Residues 237 to 246 show a composition bias toward gly residues; it reads GEPGTNGGPP. Residues 367 to 376 show a composition bias toward basic and acidic residues; it reads WTDRLKSFFS.

The protein belongs to the DnaJ family. Homodimer. Zn(2+) serves as cofactor.

Its subcellular location is the cytoplasm. In terms of biological role, participates actively in the response to hyperosmotic and heat shock by preventing the aggregation of stress-denatured proteins and by disaggregating proteins, also in an autonomous, DnaK-independent fashion. Unfolded proteins bind initially to DnaJ; upon interaction with the DnaJ-bound protein, DnaK hydrolyzes its bound ATP, resulting in the formation of a stable complex. GrpE releases ADP from DnaK; ATP binding to DnaK triggers the release of the substrate protein, thus completing the reaction cycle. Several rounds of ATP-dependent interactions between DnaJ, DnaK and GrpE are required for fully efficient folding. Also involved, together with DnaK and GrpE, in the DNA replication of plasmids through activation of initiation proteins. The chain is Chaperone protein DnaJ from Acidovorax ebreus (strain TPSY) (Diaphorobacter sp. (strain TPSY)).